The following is a 389-amino-acid chain: Alkanesulfonate monooxygenase (389 aa).

Belongs to the SsuD family.

It catalyses the reaction an alkanesulfonate + FMNH2 + O2 = an aldehyde + FMN + sulfite + H2O + 2 H(+). Its function is as follows. Catalyzes the desulfonation of aliphatic sulfonates. The protein is Alkanesulfonate monooxygenase of Rhizobium etli (strain CIAT 652).